A 357-amino-acid polypeptide reads, in one-letter code: Elongation factor Ts (357 aa).

The segment at 82–85 (TDFV) is involved in Mg(2+) ion dislocation from EF-Tu.

The protein belongs to the EF-Ts family.

The protein localises to the cytoplasm. Functionally, associates with the EF-Tu.GDP complex and induces the exchange of GDP to GTP. It remains bound to the aminoacyl-tRNA.EF-Tu.GTP complex up to the GTP hydrolysis stage on the ribosome. This chain is Elongation factor Ts, found in Campylobacter jejuni (strain RM1221).